Consider the following 137-residue polypeptide: Flavodoxin (137 aa).

Residues valine 2–alanine 137 form the Flavodoxin-like domain.

This sequence belongs to the flavodoxin family. Requires FMN as cofactor.

In terms of biological role, low-potential electron donor to a number of redox enzymes. The polypeptide is Flavodoxin (Megasphaera elsdenii).